Consider the following 160-residue polypeptide: Endoribonuclease YbeY (160 aa).

Zn(2+)-binding residues include H123, H127, and H133.

The protein belongs to the endoribonuclease YbeY family. The cofactor is Zn(2+).

The protein localises to the cytoplasm. Single strand-specific metallo-endoribonuclease involved in late-stage 70S ribosome quality control and in maturation of the 3' terminus of the 16S rRNA. The chain is Endoribonuclease YbeY from Roseiflexus sp. (strain RS-1).